The sequence spans 100 residues: MIPLQHGLILAAILFVLGLTGLVIRRNLLFMLIGLEIMINAAALAFVVAGSYWGQTDGQIMYILAISLAAAEASIGLALLLQLHRRRQNLNIDSVSEMRG.

The next 3 membrane-spanning stretches (helical) occupy residues 4–24 (LQHGLILAAILFVLGLTGLVI), 28–48 (LLFMLIGLEIMINAAALAFVV), and 60–80 (IMYILAISLAAAEASIGLALL).

It belongs to the complex I subunit 4L family. NDH-1 is composed of 13 different subunits. Subunits NuoA, H, J, K, L, M, N constitute the membrane sector of the complex.

The protein resides in the cell inner membrane. It carries out the reaction a quinone + NADH + 5 H(+)(in) = a quinol + NAD(+) + 4 H(+)(out). Functionally, NDH-1 shuttles electrons from NADH, via FMN and iron-sulfur (Fe-S) centers, to quinones in the respiratory chain. The immediate electron acceptor for the enzyme in this species is believed to be ubiquinone. Couples the redox reaction to proton translocation (for every two electrons transferred, four hydrogen ions are translocated across the cytoplasmic membrane), and thus conserves the redox energy in a proton gradient. This Cronobacter sakazakii (strain ATCC BAA-894) (Enterobacter sakazakii) protein is NADH-quinone oxidoreductase subunit K.